The chain runs to 665 residues: Sodium/glucose cotransporter 1 (665 aa).

The Extracellular portion of the chain corresponds to 1–24 (MDSSTLSPAVTATDAPIPSYERIR). Residues 25 to 47 (NAADISVIVIYFVVVMAVGLWAM) traverse the membrane as a helical segment. Topologically, residues 48-66 (FSTNRGTVGGFFLAGRSMV) are cytoplasmic. A helical membrane pass occupies residues 67-90 (WWPIGASLFASNIGSGHFVGLAGT). Topologically, residues 91–95 (GAAAG) are extracellular. Residues 96–117 (IAMGGFEWNALVLVVVLGWIFV) form a helical membrane-spanning segment. Topologically, residues 118-139 (PIYIKAGVVTMPEYLRKRFGGK) are cytoplasmic. The chain crosses the membrane as a helical span at residues 140-169 (RIQIYLSVLSLLLYIFTKISADIFSGAIFI). The Extracellular portion of the chain corresponds to 170–176 (NLALGLD). A helical transmembrane segment spans residues 177 to 193 (IYLAIFILLAITALYTI). Residues 194–202 (TGGLAAVIY) are Cytoplasmic-facing. Residues 203 to 221 (TDTLQTAIMLVGSFILTGF) traverse the membrane as a helical segment. The Extracellular segment spans residues 222–275 (AFNEVGGYEAFMDKYMKAIPTKVSNGNFTAKEECYTPRADSFHIFRDPITGDMP). An N-linked (GlcNAc...) asparagine glycan is attached at N248. Intrachain disulfides connect C255/C511, C255/C611, C345/C351, C355/C361, and C517/C522. The helical transmembrane segment at 276–295 (WPGLIFGLAILALWYWCTDQ) threads the bilayer. Topologically, residues 296–309 (VIVQRCLSAKNMSH) are cytoplasmic. Residues 310-331 (VKADCTLCGYLKLLPMFLMVMP) form a helical membrane-spanning segment. Residues 332–375 (GMISRILYTEKIACVLPEECQKYCGTPVGCTNIAYPTLVVELMP) are Extracellular-facing. A helical membrane pass occupies residues 376–406 (NGLRGLMLSVMMASLMSSLTSIFNSASTLFT). The Cytoplasmic segment spans residues 407–422 (MDIYTKIRKKASEKEL). The helical transmembrane segment at 423–444 (MIAGRLFILVLIGISIAWVPIV) threads the bilayer. Residues 445–451 (QSAQSGQ) lie on the Extracellular side of the membrane. A helical transmembrane segment spans residues 452-477 (LFDYIQSITSYLGPPIAAVFLLAIFC). Q457 is a D-glucose binding site. The Cytoplasmic segment spans residues 478–481 (KRVN). Residues 482–504 (EQGAFWGLILGFLIGISRMITEF) traverse the membrane as a helical segment. Residues 505–525 (AYGTGSCMEPSNCPKIICGVH) lie on the Extracellular side of the membrane. A helical transmembrane segment spans residues 526–547 (YLYFAIILFVISVITILIISFL). Residues 548–645 (TKPIPDVHLY…TSEKPLWRTV (98 aa)) are Cytoplasmic-facing. S585 bears the Phosphoserine mark. T588 carries the post-translational modification Phosphothreonine. Residues 646-663 (VNINGIILLAVAVFCHAY) traverse the membrane as a helical segment. The Extracellular portion of the chain corresponds to 664-665 (FA).

It belongs to the sodium:solute symporter (SSF) (TC 2.A.21) family. N-glycosylation is not necessary for the cotransporter function. Expressed in enterocytes and enteroendocrine cells of small intestine (at protein level). Expressed in S3 segments of renal proximal tubules (at protein level). Expressed in endometrial glandular and epithelial cells (at protein level).

It localises to the apical cell membrane. It carries out the reaction D-glucose(out) + 2 Na(+)(out) = D-glucose(in) + 2 Na(+)(in). It catalyses the reaction D-galactose(out) + 2 Na(+)(out) = D-galactose(in) + 2 Na(+)(in). With respect to regulation, enhanced by the interaction with PDZK1IP1/MAP17; but unlike SLC5A2/SGLT2, PDZK1IP1 is not essential for SLC5A1 transporter activity. Possibly modulated by cholesterol binding. Functionally, electrogenic Na(+)-coupled sugar symporter that actively transports D-glucose or D-galactose at the plasma membrane, with a Na(+) to sugar coupling ratio of 2:1. Transporter activity is driven by a transmembrane Na(+) electrochemical gradient set by the Na(+)/K(+) pump. Has a primary role in the transport of dietary monosaccharides from enterocytes to blood. Responsible for the absorption of D-glucose or D-galactose across the apical brush-border membrane of enterocytes, whereas basolateral exit is provided by GLUT2. Additionally, functions as a D-glucose sensor in enteroendocrine cells, triggering the secretion of the incretins GCG and GIP that control food intake and energy homeostasis. Together with SGLT2, functions in reabsorption of D-glucose from glomerular filtrate, playing a nonredundant role in the S3 segment of the proximal tubules. Transports D-glucose into endometrial epithelial cells, controlling glycogen synthesis and nutritional support for the embryo as well as the decidual transformation of endometrium prior to conception. Acts as a water channel enabling passive water transport in response to the osmotic gradient created upon sugar and Na(+) uptake. Has high water conductivity comparable to aquaporins and therefore is expected to play an important role in transepithelial water permeability, especially in the small intestine. The protein is Sodium/glucose cotransporter 1 (Slc5a1) of Mus musculus (Mouse).